The chain runs to 467 residues: UDP-N-acetylmuramate--L-alanine ligase (467 aa).

ATP is bound at residue 112 to 118; it reads GTHGKTT.

Belongs to the MurCDEF family.

It is found in the cytoplasm. It catalyses the reaction UDP-N-acetyl-alpha-D-muramate + L-alanine + ATP = UDP-N-acetyl-alpha-D-muramoyl-L-alanine + ADP + phosphate + H(+). It functions in the pathway cell wall biogenesis; peptidoglycan biosynthesis. Its function is as follows. Cell wall formation. The chain is UDP-N-acetylmuramate--L-alanine ligase from Azoarcus sp. (strain BH72).